We begin with the raw amino-acid sequence, 279 residues long: Diaminopimelate epimerase (279 aa).

Substrate is bound by residues asparagine 13, glutamine 46, and asparagine 66. Catalysis depends on cysteine 75, which acts as the Proton donor. Substrate-binding positions include glycine 76 to asparagine 77, asparagine 161, asparagine 194, and glutamate 212 to arginine 213. The active-site Proton acceptor is the cysteine 221. Glycine 222 to threonine 223 lines the substrate pocket.

Belongs to the diaminopimelate epimerase family. Homodimer.

It localises to the cytoplasm. It carries out the reaction (2S,6S)-2,6-diaminopimelate = meso-2,6-diaminopimelate. The protein operates within amino-acid biosynthesis; L-lysine biosynthesis via DAP pathway; DL-2,6-diaminopimelate from LL-2,6-diaminopimelate: step 1/1. Its function is as follows. Catalyzes the stereoinversion of LL-2,6-diaminopimelate (L,L-DAP) to meso-diaminopimelate (meso-DAP), a precursor of L-lysine and an essential component of the bacterial peptidoglycan. The polypeptide is Diaminopimelate epimerase (Alkalilimnicola ehrlichii (strain ATCC BAA-1101 / DSM 17681 / MLHE-1)).